Here is a 313-residue protein sequence, read N- to C-terminus: L-lactate dehydrogenase 1 (313 aa).

NAD(+) is bound by residues Val15, Asp36, Arg41, and Tyr66. Substrate contacts are provided by residues Gln83, Arg89, and 121–124 (NPVD). Residues 119 to 121 (ASN) and Ser144 contribute to the NAD(+) site. 149 to 152 (DTAR) contacts substrate. 2 residues coordinate beta-D-fructose 1,6-bisphosphate: Arg154 and His169. His176 functions as the Proton acceptor in the catalytic mechanism. Tyr218 is subject to Phosphotyrosine. Residue Thr227 participates in substrate binding.

It belongs to the LDH/MDH superfamily. LDH family. Homotetramer.

The protein localises to the cytoplasm. The enzyme catalyses (S)-lactate + NAD(+) = pyruvate + NADH + H(+). Its pathway is fermentation; pyruvate fermentation to lactate; (S)-lactate from pyruvate: step 1/1. Its activity is regulated as follows. Allosterically activated by fructose 1,6-bisphosphate (FBP). Catalyzes the conversion of lactate to pyruvate. In Listeria monocytogenes serotype 4b (strain F2365), this protein is L-lactate dehydrogenase 1.